A 609-amino-acid chain; its full sequence is Glutamine--fructose-6-phosphate aminotransferase [isomerizing] (609 aa).

C2 acts as the Nucleophile; for GATase activity in catalysis. Positions 2-218 (CGIVGAIAQR…EGDIAEITRR (217 aa)) constitute a Glutamine amidotransferase type-2 domain. SIS domains lie at 286–426 (ADEL…LKGL) and 458–599 (LAED…VDQP). K604 acts as the For Fru-6P isomerization activity in catalysis.

In terms of assembly, homodimer.

The protein localises to the cytoplasm. It catalyses the reaction D-fructose 6-phosphate + L-glutamine = D-glucosamine 6-phosphate + L-glutamate. Functionally, catalyzes the first step in hexosamine metabolism, converting fructose-6P into glucosamine-6P using glutamine as a nitrogen source. This is Glutamine--fructose-6-phosphate aminotransferase [isomerizing] from Salmonella typhimurium (strain LT2 / SGSC1412 / ATCC 700720).